A 368-amino-acid polypeptide reads, in one-letter code: Protein-glutamate methylesterase/protein-glutamine glutaminase 1 (368 aa).

The 118-residue stretch at 4-121 (KVLVVDDSGF…SRNPDKVRQL (118 aa)) folds into the Response regulatory domain. 4-aspartylphosphate is present on Asp-55. The interval 138 to 176 (SLPPLPSATSSSHAPASSSSVGASARVGAGASPAPASTS) is disordered. Residues 144-176 (SATSSSHAPASSSSVGASARVGAGASPAPASTS) are compositionally biased toward low complexity. The 197-residue stretch at 172 to 368 (PASTSAAPKR…IGRHLVEACQ (197 aa)) folds into the CheB-type methylesterase domain. Residues Ser-192, His-219, and Asp-312 contribute to the active site.

The protein belongs to the CheB family. Post-translationally, phosphorylated by CheA. Phosphorylation of the N-terminal regulatory domain activates the methylesterase activity.

The protein localises to the cytoplasm. It carries out the reaction [protein]-L-glutamate 5-O-methyl ester + H2O = L-glutamyl-[protein] + methanol + H(+). The enzyme catalyses L-glutaminyl-[protein] + H2O = L-glutamyl-[protein] + NH4(+). In terms of biological role, involved in chemotaxis. Part of a chemotaxis signal transduction system that modulates chemotaxis in response to various stimuli. Catalyzes the demethylation of specific methylglutamate residues introduced into the chemoreceptors (methyl-accepting chemotaxis proteins or MCP) by CheR. Also mediates the irreversible deamidation of specific glutamine residues to glutamic acid. This is Protein-glutamate methylesterase/protein-glutamine glutaminase 1 from Pseudomonas aeruginosa (strain ATCC 15692 / DSM 22644 / CIP 104116 / JCM 14847 / LMG 12228 / 1C / PRS 101 / PAO1).